A 1374-amino-acid polypeptide reads, in one-letter code: Major capsid protein (1374 aa).

The protein belongs to the herpesviridae major capsid protein family. Homomultimer. Makes the hexons and eleven out of twelve pentons. Interacts with triplex proteins 1/TRX1 and 2/TRX2; adjacent capsomers are linked together in groups of three by triplexes, heterotrimeric complexes composed of one molecule of TRX1 and two molecules of TRX2. Interacts with scaffold protein; this interaction allows efficient MCP transport to the host nucleus. Interacts with capsid vertex component 2/CVC2. Interacts with the small capsomere-interacting protein/SCP.

It localises to the virion. It is found in the host nucleus. Self-assembles to form an icosahedral capsid with a T=16 symmetry, about 200 nm in diameter, and consisting of 150 hexons and 12 pentons (total of 162 capsomers). Hexons form the edges and faces of the capsid and are each composed of six MCP molecules. In contrast, one penton is found at each of the 12 vertices. Eleven of the pentons are MCP pentamers, while the last vertex is occupied by the portal complex. The capsid is surrounded by a layer of proteinaceous material designated the tegument which, in turn, is enclosed in an envelope of host cell-derived lipids containing virus-encoded glycoproteins. The protein is Major capsid protein of Homo sapiens (Human).